The chain runs to 506 residues: Anaerobic nitric oxide reductase transcription regulator NorR (506 aa).

Asp-57 is modified (4-aspartylphosphate). A Sigma-54 factor interaction domain is found at 187-416 (MIGLSPAMTQ…LEHAIHRAVV (230 aa)). ATP contacts are provided by residues 215–222 (GETGTGKE) and 278–287 (ADNGTLFLDE). The segment at residues 481-500 (WAASARALETDVANLHRLAK) is a DNA-binding region (H-T-H motif).

Its pathway is nitrogen metabolism; nitric oxide reduction. Functionally, required for the expression of anaerobic nitric oxide (NO) reductase, acts as a transcriptional activator for at least the norVW operon. Activation also requires sigma-54. The protein is Anaerobic nitric oxide reductase transcription regulator NorR of Salmonella choleraesuis (strain SC-B67).